A 271-amino-acid polypeptide reads, in one-letter code: ATP-dependent Clp protease proteolytic subunit 6, chloroplastic (271 aa).

Residues 1-30 are disordered; sequence MAGLAISPPLGLSFSSRTRNPKPTSFLSHN. A chloroplast-targeting transit peptide spans 1-77; that stretch reads MAGLAISPPL…KAPRFGVIEA (77 aa). Over residues 13 to 30 the composition is skewed to polar residues; sequence SFSSRTRNPKPTSFLSHN. The active-site Nucleophile is S175. H200 is a catalytic residue.

It belongs to the peptidase S14 family. As to quaternary structure, component of the chloroplastic Clp protease core complex which consist of at least 16 proteins: CLPP4 (3 copies), CLPP5 (3 copies), CLPR4 (2 copies), ClpP1 (1 copy), CLPP6 (1 copy), CLPR2 (1 copy), CLPT1 (1 copy), CLPT2 (1 copy) and 3 copies of CLPP3 and/or CLPR1 and/or CLPR3. The core complex is organized in two heptameric rings, one containing CLPP3,4,5,6 in a 1:2:3:1 ratio and the other CLPP1 and CLPR1,2,3,4 in a 3:1:1:1:1 ratio. Mostly expressed in leaves. Also detected in stems, and to a lower extent, in roots (at protein level).

It localises to the plastid. Its subcellular location is the chloroplast stroma. The enzyme catalyses Hydrolysis of proteins to small peptides in the presence of ATP and magnesium. alpha-casein is the usual test substrate. In the absence of ATP, only oligopeptides shorter than five residues are hydrolyzed (such as succinyl-Leu-Tyr-|-NHMec, and Leu-Tyr-Leu-|-Tyr-Trp, in which cleavage of the -Tyr-|-Leu- and -Tyr-|-Trp bonds also occurs).. Its function is as follows. Cleaves peptides in various proteins in a process that requires ATP hydrolysis. Has a chymotrypsin-like activity. Plays a major role in the degradation of misfolded proteins. Essential protein required for chloroplast development and integrity. The protein is ATP-dependent Clp protease proteolytic subunit 6, chloroplastic of Arabidopsis thaliana (Mouse-ear cress).